We begin with the raw amino-acid sequence, 364 residues long: Apyrase (364 aa).

A signal peptide spans 1–35 (MRSSYRVGNPIRFQPTNVVGLLLLSLVLSFMLVQS).

The protein belongs to the apyrase family. It depends on Ca(2+) as a cofactor. As to expression, salivary gland (at protein level).

The protein resides in the secreted. The catalysed reaction is a ribonucleoside 5'-triphosphate + 2 H2O = a ribonucleoside 5'-phosphate + 2 phosphate + 2 H(+). Functionally, facilitates hematophagy by inhibiting ADP-dependent platelet aggregation in the host. Cleaves adenosine triphosphate (ATP) and adenosine diphosphate (ADP) to adenosine monophosphate (AMP) and inorganic phosphate in calcium-dependent manner. This chain is Apyrase, found in Cimex lectularius (Bed bug).